The sequence spans 367 residues: Anhydro-N-acetylmuramic acid kinase (367 aa).

ATP is bound at residue 13–20 (GTSMDGAD).

It belongs to the anhydro-N-acetylmuramic acid kinase family.

The catalysed reaction is 1,6-anhydro-N-acetyl-beta-muramate + ATP + H2O = N-acetyl-D-muramate 6-phosphate + ADP + H(+). The protein operates within amino-sugar metabolism; 1,6-anhydro-N-acetylmuramate degradation. It participates in cell wall biogenesis; peptidoglycan recycling. Catalyzes the specific phosphorylation of 1,6-anhydro-N-acetylmuramic acid (anhMurNAc) with the simultaneous cleavage of the 1,6-anhydro ring, generating MurNAc-6-P. Is required for the utilization of anhMurNAc either imported from the medium or derived from its own cell wall murein, and thus plays a role in cell wall recycling. The sequence is that of Anhydro-N-acetylmuramic acid kinase from Neisseria meningitidis serogroup B (strain ATCC BAA-335 / MC58).